A 154-amino-acid chain; its full sequence is Putative NADPH-dependent 7-cyano-7-deazaguanine reductase (154 aa).

The Proton donor role is filled by aspartate 52. Residues 67 to 69 and 86 to 87 each bind substrate; these read VES and HE.

The protein belongs to the GTP cyclohydrolase I family. QueF type 1 subfamily.

It is found in the cytoplasm. It carries out the reaction 7-aminomethyl-7-carbaguanine + 2 NADP(+) = 7-cyano-7-deazaguanine + 2 NADPH + 3 H(+). Its pathway is tRNA modification; tRNA-queuosine biosynthesis. In terms of biological role, catalyzes the NADPH-dependent reduction of 7-cyano-7-deazaguanine (preQ0) to 7-aminomethyl-7-deazaguanine (preQ1). This Streptococcus pneumoniae (strain ATCC BAA-255 / R6) protein is Putative NADPH-dependent 7-cyano-7-deazaguanine reductase.